Here is a 415-residue protein sequence, read N- to C-terminus: uncharacterized protein (415 aa).

4 residues coordinate [4Fe-4S] cluster: Cys85, Cys91, Cys94, and Cys175. Positions 248, 276, 297, and 344 each coordinate S-adenosyl-L-methionine. Cys371 (nucleophile) is an active-site residue.

The protein belongs to the class I-like SAM-binding methyltransferase superfamily. RNA M5U methyltransferase family.

This is an uncharacterized protein from Leptospira interrogans serogroup Icterohaemorrhagiae serovar copenhageni (strain Fiocruz L1-130).